Consider the following 173-residue polypeptide: ATP synthase subunit b (173 aa).

The helical transmembrane segment at I19 to P39 threads the bilayer.

Belongs to the ATPase B chain family. In terms of assembly, F-type ATPases have 2 components, F(1) - the catalytic core - and F(0) - the membrane proton channel. F(1) has five subunits: alpha(3), beta(3), gamma(1), delta(1), epsilon(1). F(0) has three main subunits: a(1), b(2) and c(10-14). The alpha and beta chains form an alternating ring which encloses part of the gamma chain. F(1) is attached to F(0) by a central stalk formed by the gamma and epsilon chains, while a peripheral stalk is formed by the delta and b chains.

It is found in the cell membrane. F(1)F(0) ATP synthase produces ATP from ADP in the presence of a proton or sodium gradient. F-type ATPases consist of two structural domains, F(1) containing the extramembraneous catalytic core and F(0) containing the membrane proton channel, linked together by a central stalk and a peripheral stalk. During catalysis, ATP synthesis in the catalytic domain of F(1) is coupled via a rotary mechanism of the central stalk subunits to proton translocation. In terms of biological role, component of the F(0) channel, it forms part of the peripheral stalk, linking F(1) to F(0). This chain is ATP synthase subunit b, found in Bifidobacterium longum (strain NCC 2705).